The sequence spans 655 residues: Putative esterase (655 aa).

Residues 9–29 (VLSLTLIYISISIGFSVYFYV) traverse the membrane as a helical segment. N-linked (GlcNAc...) asparagine; by host glycans are attached at residues Asn-71, Asn-89, Asn-101, Asn-185, Asn-386, Asn-449, and Asn-512. The active-site Charge relay system is the His-515. 2 N-linked (GlcNAc...) asparagine; by host glycosylation sites follow: Asn-527 and Asn-597.

Belongs to the type-B carboxylesterase/lipase family.

The protein localises to the membrane. It carries out the reaction a carboxylic ester + H2O = an alcohol + a carboxylate + H(+). In Noctuidae (owlet moths), this protein is Putative esterase.